The sequence spans 185 residues: Ribosome-recycling factor (185 aa).

Belongs to the RRF family.

It is found in the cytoplasm. In terms of biological role, responsible for the release of ribosomes from messenger RNA at the termination of protein biosynthesis. May increase the efficiency of translation by recycling ribosomes from one round of translation to another. The protein is Ribosome-recycling factor of Pseudomonas syringae pv. tomato (strain ATCC BAA-871 / DC3000).